We begin with the raw amino-acid sequence, 80 residues long: Exodeoxyribonuclease 7 small subunit (80 aa).

The protein belongs to the XseB family. In terms of assembly, heterooligomer composed of large and small subunits.

Its subcellular location is the cytoplasm. The enzyme catalyses Exonucleolytic cleavage in either 5'- to 3'- or 3'- to 5'-direction to yield nucleoside 5'-phosphates.. In terms of biological role, bidirectionally degrades single-stranded DNA into large acid-insoluble oligonucleotides, which are then degraded further into small acid-soluble oligonucleotides. The polypeptide is Exodeoxyribonuclease 7 small subunit (Pseudomonas putida (strain ATCC 700007 / DSM 6899 / JCM 31910 / BCRC 17059 / LMG 24140 / F1)).